A 672-amino-acid polypeptide reads, in one-letter code: Protein seu-1 (672 aa).

Disordered regions lie at residues 1 to 463 (MSSI…AGTE) and 576 to 672 (LAPP…LKHL). Basic and acidic residues predominate over residues 8-20 (NDNRRPTFRDHRT). Gly residues predominate over residues 25–34 (GRGGSGGGGR). Positions 62–85 (RSQDHRQRSPEVRRHRSPEKESKD) are enriched in basic and acidic residues. A compositionally biased stretch (low complexity) spans 87–105 (VVTSTGSSRGATSASVTSS). 4 stretches are compositionally biased toward basic and acidic residues: residues 107 to 138 (RRHE…DADR), 189 to 226 (VSRH…KSNG), 234 to 268 (RRRE…KVED), and 289 to 306 (EQAK…ESHQ). Positions 307–317 (SAHSAAVSNAS) are enriched in low complexity. The span at 322–343 (SEEELDYEEDDIDVDLDGDIDV) shows a compositional bias: acidic residues. Basic and acidic residues-rich tracts occupy residues 366–375 (NDVKDETMEE), 382–396 (PEKK…DDKD), 410–424 (RRED…SDHH), 436–447 (RATDHKESRRSE), 607–626 (SFGD…RHMD), and 636–659 (DHRV…ERGF).

As to expression, highly expressed in intestinal cells, lateral hypodermal (seam) cells, Pn.p ventral hypodermal cells, and spermatheca. Expressed at low levels in the ventral nerve cord.

The protein localises to the nucleus. Functionally, together with unc-5, involved in touch neuron axon guidance. During gonad morphogenesis, plays a role in the unc-5-/unc-6-mediated migration of distal tip cells along the body. This Caenorhabditis elegans protein is Protein seu-1.